We begin with the raw amino-acid sequence, 960 residues long: Probable glutamyl endopeptidase, chloroplastic (960 aa).

The N-terminal 62 residues, 1-62, are a transit peptide targeting the chloroplast; the sequence is MMRFHKACHR…FSENPLTTVM (62 aa). Residues 78–98 form a disordered region; that stretch reads SGGAEDGGGTSNGSLSASATA. Polar residues predominate over residues 89 to 98; that stretch reads NGSLSASATA. Catalysis depends on charge relay system residues serine 780, aspartate 854, and histidine 888. Residues 915–960 are disordered; the sequence is TSDADTSPDQSKEGSDSADKVSTGTGGGNPEFGEHEVHSKLRRSLL. The segment covering 924–933 has biased composition (basic and acidic residues); that stretch reads QSKEGSDSAD.

It belongs to the peptidase S9D family.

Its subcellular location is the plastid. The protein localises to the chloroplast stroma. Its function is as follows. Serine-type protease active in vitro against the LHCII N-terminal. Cleaves its substrate on the carboxy-side of Glu residues. This chain is Probable glutamyl endopeptidase, chloroplastic (GEP), found in Arabidopsis thaliana (Mouse-ear cress).